Here is a 415-residue protein sequence, read N- to C-terminus: Homoserine O-succinyltransferase (415 aa).

The AB hydrolase-1 domain maps to 69–383 (NAVLVCHALN…PHGHDAFLLD (315 aa)). Serine 175 serves as the catalytic Nucleophile. Arginine 245 is a substrate binding site. Catalysis depends on residues aspartate 344 and histidine 377. Aspartate 378 serves as a coordination point for substrate.

This sequence belongs to the AB hydrolase superfamily. MetX family. Homodimer.

It localises to the cytoplasm. It catalyses the reaction L-homoserine + succinyl-CoA = O-succinyl-L-homoserine + CoA. The protein operates within amino-acid biosynthesis; L-methionine biosynthesis via de novo pathway; O-succinyl-L-homoserine from L-homoserine: step 1/1. Transfers a succinyl group from succinyl-CoA to L-homoserine, forming succinyl-L-homoserine. In Bordetella pertussis (strain Tohama I / ATCC BAA-589 / NCTC 13251), this protein is Homoserine O-succinyltransferase.